The following is a 286-amino-acid chain: Elongation factor Ts (286 aa).

The segment at 82–85 (TDFV) is involved in Mg(2+) ion dislocation from EF-Tu.

This sequence belongs to the EF-Ts family.

It localises to the cytoplasm. Functionally, associates with the EF-Tu.GDP complex and induces the exchange of GDP to GTP. It remains bound to the aminoacyl-tRNA.EF-Tu.GTP complex up to the GTP hydrolysis stage on the ribosome. The polypeptide is Elongation factor Ts (Hahella chejuensis (strain KCTC 2396)).